Here is a 405-residue protein sequence, read N- to C-terminus: MPEPVAEPALNGLRLNLRILSIVMFNFASYLTIGLPLAVLPGYVHDVMGFSAFWAGLVISLQYFATLLSRPHAGRYADLLGPKKIVVFGLCGCFLSGLGYLTAGLTASLPVISLLLLCLGRVILGIGQSFAGTGSTLWGVGVVGSLHIGRVISWNDIVTYGAMAMGAPLGVVFYHWGGLQALALIIMGVALVAILLAIPRPTVKASKGKPLPFRAVLGRVWLYGMALALASAGFGVIATFITLFYDVKGWDGAAFALTLFSCAFVGTRLLFPNGINRIGGLNVAMICFSVEIIGLLLVGVATMPWMAKIGVLLAGAGFSLVFPALGVVAVKAVPQQNQGAALATYTVFMDLSLGVTGPLAGLVMSWAGVPVIYLAAAGLVAIALLLTWRLKKRPPEHVPEAASSS.

Helical transmembrane passes span 19–39 (ILSI…PLAV), 47–67 (VMGF…FATL), 85–105 (IVVF…TAGL), 129–149 (SFAG…LHIG), 157–177 (IVTY…YHWG), 178–198 (GLQA…LLAI), 224–244 (GMAL…ITLF), 252–272 (GAAF…LLFP), 283–303 (VAMI…VATM), 309–329 (IGVL…GVVA), 344–364 (TYTV…GLVM), and 366–386 (WAGV…ALLL).

It belongs to the major facilitator superfamily. YhhS family.

The protein resides in the cell inner membrane. This is an uncharacterized protein from Escherichia coli O157:H7.